The primary structure comprises 346 residues: MNDEKSQDNGKRNSGYTSIEQMLAVNPGKTPISLLQEYGTRIGKTPVYDLLKAEGQAHQPNFTFRVSVGDINCTGHGPSKKAAKHKAAEAALKMLKGGMLGGIGGNGMEGDGFVGIEMEGECPQSEMKSSSSTQQAECNPVGALQELVVQKGWRLPEYTVTQESGPAHRKEFTMTCRVERFVEIGSGTSKKLAKRNAAAKMLSRIHDVPVDMRSSHEAEAEDDTFNMQIGGRLEGGKSKGLGCTWDSLRNSAGEKILQLRCHPLGQSDSIDSNFCSLLRELSEEQRFGVSYLDIEERSLSGLYQCLVELSTQPITVCHGFASSLDAARASAAHNALQYLKIMAGGK.

DRBM domains follow at residues 30–97 (TPIS…MLKG), 139–207 (NPVG…RIHD), and 273–341 (NFCS…YLKI).

This sequence belongs to the TARBP2 family. Self-associates. Component of the RISC loading complex (RLC), or micro-RNA (miRNA) loading complex (miRLC), which is composed of dicer1, ago2 and tarbp2. Note that the trimeric RLC/miRLC is also referred to as RISC.

The protein resides in the cytoplasm. In terms of biological role, required for formation of the RNA induced silencing complex (RISC). Component of the RISC loading complex (RLC), also known as the micro-RNA (miRNA) loading complex (miRLC), which is composed of dicer1, ago2 and tarbp2. Within the RLC/miRLC, dicer1 and tarbp2 are required to process precursor miRNAs (pre-miRNAs) to mature miRNAs and then load them onto ago2. ago2 bound to the mature miRNA constitutes the minimal RISC and may subsequently dissociate from dicer1 and tarbp2. May also play a role in the production of short interfering RNAs (siRNAs) from double-stranded RNA (dsRNA) by dicer1. Binds in vitro to the PRM1 3'-UTR. Seems to act as a repressor of translation. For some pre-miRNA substrates, may also alter the choice of cleavage site by DICER1. The chain is RISC-loading complex subunit tarbp2 (tarbp2) from Danio rerio (Zebrafish).